The chain runs to 452 residues: Bifunctional protein GlmU (452 aa).

Residues 1–224 are pyrophosphorylase; sequence MNIVILAAGM…EWETHGVNSK (224 aa). UDP-N-acetyl-alpha-D-glucosamine-binding positions include 6–9, K20, Q71, 76–77, 98–100, G135, E149, N164, and N222; these read LAAG, GT, and YGD. Mg(2+) is bound at residue D100. N222 contributes to the Mg(2+) binding site. The linker stretch occupies residues 225–245; it reads VQLAELERIHQRNIAHALLEQ. The segment at 246 to 452 is N-acetyltransferase; the sequence is GVTLADPARI…NWQRPVKIKK (207 aa). UDP-N-acetyl-alpha-D-glucosamine-binding residues include R328 and K346. H358 serves as the catalytic Proton acceptor. 2 residues coordinate UDP-N-acetyl-alpha-D-glucosamine: Y361 and N372. Residues A375, 381–382, S400, A418, and R435 contribute to the acetyl-CoA site; that span reads NY.

It in the N-terminal section; belongs to the N-acetylglucosamine-1-phosphate uridyltransferase family. The protein in the C-terminal section; belongs to the transferase hexapeptide repeat family. Homotrimer. Requires Mg(2+) as cofactor.

The protein resides in the cytoplasm. The catalysed reaction is alpha-D-glucosamine 1-phosphate + acetyl-CoA = N-acetyl-alpha-D-glucosamine 1-phosphate + CoA + H(+). It carries out the reaction N-acetyl-alpha-D-glucosamine 1-phosphate + UTP + H(+) = UDP-N-acetyl-alpha-D-glucosamine + diphosphate. The protein operates within nucleotide-sugar biosynthesis; UDP-N-acetyl-alpha-D-glucosamine biosynthesis; N-acetyl-alpha-D-glucosamine 1-phosphate from alpha-D-glucosamine 6-phosphate (route II): step 2/2. It functions in the pathway nucleotide-sugar biosynthesis; UDP-N-acetyl-alpha-D-glucosamine biosynthesis; UDP-N-acetyl-alpha-D-glucosamine from N-acetyl-alpha-D-glucosamine 1-phosphate: step 1/1. Its pathway is bacterial outer membrane biogenesis; LPS lipid A biosynthesis. Functionally, catalyzes the last two sequential reactions in the de novo biosynthetic pathway for UDP-N-acetylglucosamine (UDP-GlcNAc). The C-terminal domain catalyzes the transfer of acetyl group from acetyl coenzyme A to glucosamine-1-phosphate (GlcN-1-P) to produce N-acetylglucosamine-1-phosphate (GlcNAc-1-P), which is converted into UDP-GlcNAc by the transfer of uridine 5-monophosphate (from uridine 5-triphosphate), a reaction catalyzed by the N-terminal domain. This chain is Bifunctional protein GlmU, found in Janthinobacterium sp. (strain Marseille) (Minibacterium massiliensis).